A 77-amino-acid chain; its full sequence is Putative snRNP Sm-like protein (77 aa).

In terms of domain architecture, Sm spans R4 to G76.

The protein belongs to the snRNP Sm proteins family.

This Archaeoglobus fulgidus (strain ATCC 49558 / DSM 4304 / JCM 9628 / NBRC 100126 / VC-16) protein is Putative snRNP Sm-like protein.